The sequence spans 284 residues: Putative ribosome biogenesis protein C306.07c (284 aa).

The interval 264–284 (LKKSELRAQKRGSSGEGKGNK) is disordered.

It belongs to the universal ribosomal protein uL1 family. Highly divergent. Component of the 90S pre-ribosomes.

Its subcellular location is the nucleus. It localises to the nucleolus. In terms of biological role, involved in rRNA-processing and ribosome biosynthesis. The protein is Putative ribosome biogenesis protein C306.07c of Schizosaccharomyces pombe (strain 972 / ATCC 24843) (Fission yeast).